The chain runs to 319 residues: Cell division protein FtsQ (319 aa).

The tract at residues 1-53 (MDSREDMVPDVLLEAPNPRRRQSADTSTERPTRPARREQGYARVTPRGERMGN) is disordered. Topologically, residues 1 to 70 (MDSREDMVPD…PDFFAWFDPR (70 aa)) are cytoplasmic. The segment covering 27 to 52 (STERPTRPARREQGYARVTPRGERMG) has biased composition (basic and acidic residues). The helical transmembrane segment at 71-87 (WLWVPLMVCLAVGGYWA) threads the bilayer. At 88–319 (YEPLEKLLER…NATRNAPTHP (232 aa)) the chain is on the periplasmic side. Residues 97-166 (RPFKSVVVEG…DTLVVKIAEQ (70 aa)) form the POTRA domain.

This sequence belongs to the FtsQ/DivIB family. FtsQ subfamily. As to quaternary structure, part of a complex composed of FtsB, FtsL and FtsQ.

It localises to the cell inner membrane. Its function is as follows. Essential cell division protein. May link together the upstream cell division proteins, which are predominantly cytoplasmic, with the downstream cell division proteins, which are predominantly periplasmic. May control correct divisome assembly. This Cellvibrio japonicus (strain Ueda107) (Pseudomonas fluorescens subsp. cellulosa) protein is Cell division protein FtsQ.